The following is a 285-amino-acid chain: ATP synthase subunit a (285 aa).

6 consecutive transmembrane segments (helical) span residues 41–61 (TWHVDTLAWSIGLGLIFLWIF), 102–122 (IAPLALTIFVWVFLMNLMDLI), 164–184 (LGVFILMVGFAIKIKGIGGFI), 197–217 (VFVQILLIPFNLLLELIALVS), 226–246 (LFGNLYAGELIFILIGAIGFM), and 252–272 (FVWAVFHILVITLQAFLFMML).

The protein belongs to the ATPase A chain family. In terms of assembly, F-type ATPases have 2 components, CF(1) - the catalytic core - and CF(0) - the membrane proton channel. CF(1) has five subunits: alpha(3), beta(3), gamma(1), delta(1), epsilon(1). CF(0) has three main subunits: a(1), b(2) and c(9-12). The alpha and beta chains form an alternating ring which encloses part of the gamma chain. CF(1) is attached to CF(0) by a central stalk formed by the gamma and epsilon chains, while a peripheral stalk is formed by the delta and b chains.

It is found in the cell inner membrane. Key component of the proton channel; it plays a direct role in the translocation of protons across the membrane. This Pseudoalteromonas translucida (strain TAC 125) protein is ATP synthase subunit a.